Reading from the N-terminus, the 221-residue chain is Protein-L-isoaspartate O-methyltransferase (221 aa).

Ser-60 is a catalytic residue.

Belongs to the methyltransferase superfamily. L-isoaspartyl/D-aspartyl protein methyltransferase family.

It is found in the cytoplasm. It carries out the reaction [protein]-L-isoaspartate + S-adenosyl-L-methionine = [protein]-L-isoaspartate alpha-methyl ester + S-adenosyl-L-homocysteine. Functionally, catalyzes the methyl esterification of L-isoaspartyl residues in peptides and proteins that result from spontaneous decomposition of normal L-aspartyl and L-asparaginyl residues. It plays a role in the repair and/or degradation of damaged proteins. The chain is Protein-L-isoaspartate O-methyltransferase from Rhodospirillum centenum (strain ATCC 51521 / SW).